The sequence spans 188 residues: Elongation factor P (188 aa).

Residue Lys34 is modified to N6-(3,6-diaminohexanoyl)-5-hydroxylysine.

Belongs to the elongation factor P family. In terms of processing, may be beta-lysylated on the epsilon-amino group of Lys-34 by the combined action of EpmA and EpmB, and then hydroxylated on the C5 position of the same residue by EpmC (if this protein is present). Lysylation is critical for the stimulatory effect of EF-P on peptide-bond formation. The lysylation moiety may extend toward the peptidyltransferase center and stabilize the terminal 3-CCA end of the tRNA. Hydroxylation of the C5 position on Lys-34 may allow additional potential stabilizing hydrogen-bond interactions with the P-tRNA.

The protein resides in the cytoplasm. Its pathway is protein biosynthesis; polypeptide chain elongation. Its function is as follows. Involved in peptide bond synthesis. Alleviates ribosome stalling that occurs when 3 or more consecutive Pro residues or the sequence PPG is present in a protein, possibly by augmenting the peptidyl transferase activity of the ribosome. Modification of Lys-34 is required for alleviation. This Yersinia pseudotuberculosis serotype O:1b (strain IP 31758) protein is Elongation factor P.